The primary structure comprises 528 residues: CTD kinase subunit alpha (528 aa).

Polar residues predominate over residues 1–15 (MSYNNGNTYSKSYSR). The disordered stretch occupies residues 1 to 148 (MSYNNGNTYS…NTSNDIKNGY (148 aa)). The residue at position 14 (serine 14) is a Phosphoserine; by autocatalysis. The Nuclear localization signal signature appears at 37–44 (PPKRIRTD). The segment covering 45–103 (SGYQSNMDNISSHRVNSNDQPGHTKSRGNNNLSRYNDTSFQTSSRYQGSRYNNNNTSYE) has biased composition (polar residues). Positions 104-118 (NRPKSIKRDETKAEF) are enriched in basic and acidic residues. Residues 134 to 144 (YNNSSNTSNDI) show a composition bias toward polar residues. The Protein kinase domain maps to 183-469 (YLRIMQVGEG…ATEALQSDYF (287 aa)). ATP-binding positions include 189 to 197 (VGEGTYGKV) and lysine 212. Residue aspartate 306 is the Proton acceptor of the active site. Phosphothreonine is present on threonine 338. Residues 497 to 528 (QKRPNILSTNTNNKGNGNSNNNNNNNNDDDDK) form a disordered region. Low complexity predominate over residues 504-522 (STNTNNKGNGNSNNNNNNN).

It belongs to the protein kinase superfamily. CMGC Ser/Thr protein kinase family. CDC2/CDKX subfamily. In terms of assembly, CTDK-I consists of three subunits, CTK1, CTK2 and CTK3 (also called alpha, beta and gamma). Interacts directly with the CTK2 and CTK3 subunits, this interaction is required for kinase activity. Interacts with RNA polymerase I. Interacts with SNF1, but only at low glucose concentrations. Interacts with translating ribosomes. Phosphorylated on Thr-338 by CAK1. Phosphorylation is essential for the elevated CTD Ser-2 phosphorylation and required to activate transcription of stationary-phase genes during the diauxic shift.

It is found in the nucleus. The protein localises to the nucleolus. It localises to the cytoplasm. It catalyses the reaction [DNA-directed RNA polymerase] + ATP = phospho-[DNA-directed RNA polymerase] + ADP + H(+). Its function is as follows. Catalytic subunit of the CTDK-I complex, which hyperphosphorylates the C-terminal heptapeptide repeat domain (CTD) of the largest RNA polymerase II subunit. CTDK-I phosphorylates 'Ser-5' if the CTD substrate is not phosphorylated at 'Ser-5', but will phosphorylate 'Ser-2' of a CTD substrate if 'Ser-5' is already phosphorylated. CTDK-I is also more reactive toward substrates that are prephosphorylated at 'Ser-2' or 'Ser-5' compared with an unphosphorylated CTD substrate, therefore efficiently creating doubly phosphorylated CTD repeats. Involved in RNA polymerase II transcriptional elongation, and through PTI1, pre-mRNA 3'-end processing. Participates in both positive and negative regulation of CTD phosphorylation. Required for DNA damage induced transcription, including the expression of the RNR genes, and reprogramming of gene expression upon amino acid starvation. Required for SET2 mediated H3K36 methylation. Also regulates H3K4 methylation. Controls the maintenance of suppressive chromatin in the coding regions of genes by both promoting H3K36 methylation, which leads to histone deacetylation, and catalyzing phosphorylation of the CTD required to localize H3K4 chromatin modification specifically to the 5' ends of genes, thereby creating a boundary for H3K4 methylation that prevents a mark associated with transcriptional initiation from spreading into the bodies of genes. Involved in RNA polymerase I transcription. Involved in telomere maintenance. Acts together with SNF1 to induce GSY2 transcription in response to glucose limitation. Involved in the adaptation to alternative carbon sources, including galactose, glycerol and ethanol, but not raffinose. Required for the integrity of the rDNA locus. Functions in translation elongation by enhancing decoding fidelity. Needed for translational accuracy by phosphorylating RPS2. The protein is CTD kinase subunit alpha (CTK1) of Saccharomyces cerevisiae (strain ATCC 204508 / S288c) (Baker's yeast).